Here is an 82-residue protein sequence, read N- to C-terminus: Apovitellenin-1 (82 aa).

This sequence belongs to the apovitellenin family. Monomer. In terms of tissue distribution, found in egg yolk and in plasma.

Functionally, protein component of the very low density lipoprotein (VLDL) of egg-laying females. Potent lipoprotein lipase inhibitor, preventing the loss of triglycerides from VLDL on their way from the liver to the growing oocytes. This chain is Apovitellenin-1, found in Meleagris gallopavo (Wild turkey).